A 31-amino-acid polypeptide reads, in one-letter code: Cliotide T13 (31 aa).

The segment at residues 1 to 31 is a cross-link (cyclopeptide (Asp-Asn)); that stretch reads DTTPCGESCVWIPCVSSIVGCSCQNKVCYQN. 3 disulfide bridges follow: cysteine 5–cysteine 21, cysteine 9–cysteine 23, and cysteine 14–cysteine 28.

In terms of processing, contains 3 disulfide bonds. Post-translationally, this is a cyclic peptide. In terms of tissue distribution, expressed in seed but not in root nodules.

In terms of biological role, probably participates in a plant defense mechanism. Not active against Gram-negative bacterium E.coli ATCC 700926 or Gram-positive bacterium S.aureus ATCC 12600 up to a concentration of 100 uM under low-salt conditions. This Clitoria ternatea (Butterfly pea) protein is Cliotide T13.